We begin with the raw amino-acid sequence, 408 residues long: Probable cysteine desulfurase (408 aa).

Lys-225 carries the N6-(pyridoxal phosphate)lysine modification.

It belongs to the class-V pyridoxal-phosphate-dependent aminotransferase family. Csd subfamily. Requires pyridoxal 5'-phosphate as cofactor.

The enzyme catalyses (sulfur carrier)-H + L-cysteine = (sulfur carrier)-SH + L-alanine. Catalyzes the removal of elemental sulfur and selenium atoms from L-cysteine, L-cystine, L-selenocysteine, and L-selenocystine to produce L-alanine. In Mycoplasma pneumoniae (strain ATCC 29342 / M129 / Subtype 1) (Mycoplasmoides pneumoniae), this protein is Probable cysteine desulfurase (csd).